The chain runs to 436 residues: UPF0597 protein YhaM (436 aa).

Belongs to the UPF0597 family.

The protein is UPF0597 protein YhaM of Escherichia coli O139:H28 (strain E24377A / ETEC).